A 360-amino-acid chain; its full sequence is Snurportin-1 (360 aa).

Met-1 carries the post-translational modification N-acetylmethionine. The segment at 1–42 (MEELSQALASSFSVSQDLNSTAAPHPRLSQYKSKYSSLEQSE) is disordered. The segment at 1-65 (MEELSQALAS…LDYVNHARRL (65 aa)) is necessary for interaction with KPNB1 and m3G-cap U1 and U5 snRNP import receptor activity. The tract at residues 1 to 159 (MEELSQALAS…NRFSSLLPGG (159 aa)) is necessary for interaction with XPO1. Positions 7-22 (ALASSFSVSQDLNSTA) are enriched in polar residues. Residues 11–73 (SFSVSQDLNS…RLAEDDWTGM (63 aa)) enclose the IBB domain. Ser-75 is subject to Phosphoserine. Positions 127–129 (GKR) are interaction with m3G-cap structure. Residues 208–328 (MHSKLPEEEG…GMKEKLTHKA (121 aa)) are necessary for binding to the m3G-cap structure. Positions 339–360 (LSTPKLKGSSHSPDHPGCLMEN) are disordered. Ser-350 is subject to Phosphoserine.

It belongs to the snurportin family. Component of an import snRNP complex composed of KPNB1, SNUPN, SMN1 and ZNF259. Component of a nuclear export receptor complex composed of KPNB1, Ran, SNUPN and XPO1. Found in a trimeric export complex with SNUPN, Ran and XPO1. Interacts (via IBB domain) with KPNB1; the interaction is direct. Interacts with DDX20, IPO7, SMN1, SNRPB and XPO1. Interacts directly with XPO1. Its interaction with XPO1 and binding to m3G-cap U snRNPs appears to be mutually exclusive. Can form homomers.

The protein resides in the nucleus. Its subcellular location is the cytoplasm. Functionally, functions as an U snRNP-specific nuclear import adapter. Involved in the trimethylguanosine (m3G)-cap-dependent nuclear import of U snRNPs. Binds specifically to the terminal m3G-cap U snRNAs. The chain is Snurportin-1 (SNUPN) from Homo sapiens (Human).